Here is a 239-residue protein sequence, read N- to C-terminus: DUP240 protein DFP3 (239 aa).

At 1 to 54 (MQPHLDNNSNNDDVKLDTLGEQNVLSSAENITLPEDTFKSYMTYLLYEMAHYKP) the chain is on the cytoplasmic side. The chain crosses the membrane as a helical span at residues 55-75 (MIFSFLALSVSILIVVIFHNV). At 76–79 (KACD) the chain is on the extracellular side. The helical transmembrane segment at 80–104 (VVFGFSIFVTSILFLSTLIPFNVYI) threads the bilayer. The Cytoplasmic portion of the chain corresponds to 105–239 (SDEGFRIKLL…RKQYPDADIP (135 aa)).

Belongs to the DUP/COS family. Interacts according to large scale protein interaction studies with MEC3 and ULP1.

Its subcellular location is the membrane. In Saccharomyces cerevisiae (strain ATCC 204508 / S288c) (Baker's yeast), this protein is DUP240 protein DFP3.